A 55-amino-acid polypeptide reads, in one-letter code: Spermatid nuclear transition protein 1 (55 aa).

Over residues 1–42 (MSTSRKLKSQGMRRGKNRTPHKGVKRSGSKRKYRKSSLKSRK) the composition is skewed to basic residues. Residues 1-55 (MSTSRKLKSQGMRRGKNRTPHKGVKRSGSKRKYRKSSLKSRKRCDDANRNLRSHL) form a disordered region. Residues S9, S36, S37, and S40 each carry the phosphoserine modification.

Belongs to the nuclear transition protein 1 family. As to expression, testis.

It is found in the nucleus. Its subcellular location is the chromosome. Functionally, plays a key role in the replacement of histones to protamine in the elongating spermatids of mammals. In condensing spermatids, loaded onto the nucleosomes, where it promotes the recruitment and processing of protamines, which are responsible for histone eviction. This is Spermatid nuclear transition protein 1 (TNP1) from Bos taurus (Bovine).